We begin with the raw amino-acid sequence, 310 residues long: Cell division protein FtsQ (310 aa).

Positions 1–57 (MSEPENTAEDKDAEAAISADAVESETTADGGENPAEGESAEGPRMRARRERMERREA) are disordered. Residues 1-95 (MSEPENTAED…AGRGKVQGLQ (95 aa)) are Cytoplasmic-facing. The chain crosses the membrane as a helical span at residues 96 to 116 (TLLLVVLLALIAVGLGSILYF). The Extracellular portion of the chain corresponds to 117–310 (TPLMSVRQTV…VSSPDLPTVK (194 aa)). Residues 120 to 188 (MSVRQTVVTG…STLRVTIVER (69 aa)) enclose the POTRA domain.

The protein belongs to the FtsQ/DivIB family. FtsQ subfamily.

It localises to the cell membrane. Its function is as follows. Essential cell division protein. The polypeptide is Cell division protein FtsQ (Mycobacteroides abscessus (strain ATCC 19977 / DSM 44196 / CCUG 20993 / CIP 104536 / JCM 13569 / NCTC 13031 / TMC 1543 / L948) (Mycobacterium abscessus)).